A 443-amino-acid polypeptide reads, in one-letter code: Dihydroorotate dehydrogenase (quinone), mitochondrial (443 aa).

The N-terminal 21 residues, 1–21 (MYQRSLFRGVAQGLKRSSVRF), are a transit peptide targeting the mitochondrion. Residues 38–54 (WKLLSVIGSFTAGVAIY) form a helical membrane-spanning segment. Residues 122–126 (AGFDK) and S146 contribute to the FMN site. K126 serves as a coordination point for substrate. S168 carries the phosphoserine modification. Residue 171–175 (NRYGF) coordinates substrate. 2 residues coordinate FMN: N234 and N264. 264–269 (NVSSPN) is a binding site for substrate. The Nucleophile role is filled by S267. Position 306 (K306) interacts with FMN. 335-336 (NT) contacts substrate. Residues G358, G387, and 408-409 (YT) each bind FMN.

This sequence belongs to the dihydroorotate dehydrogenase family. Type 2 subfamily. FMN is required as a cofactor.

Its subcellular location is the mitochondrion inner membrane. The enzyme catalyses (S)-dihydroorotate + a quinone = orotate + a quinol. It functions in the pathway pyrimidine metabolism; UMP biosynthesis via de novo pathway; orotate from (S)-dihydroorotate (quinone route): step 1/1. Functionally, in the de novo pyrimidine biosynthesis pathway, catalyzes the stereospecific oxidation of (S)-dihydroorotate to orotate with reduction of flavin and the transfer of electrons to ubiquinone, which is part of the respiratory chain. Does not use fumarate and NAD as electron acceptors. This chain is Dihydroorotate dehydrogenase (quinone), mitochondrial (ura3), found in Schizosaccharomyces pombe (strain 972 / ATCC 24843) (Fission yeast).